A 246-amino-acid polypeptide reads, in one-letter code: Probable phosphatase ASA_1316 (246 aa).

His-8, His-10, His-16, His-41, Glu-74, His-102, His-132, Asp-193, and His-195 together coordinate Zn(2+).

Belongs to the PHP family. The cofactor is Zn(2+).

This Aeromonas salmonicida (strain A449) protein is Probable phosphatase ASA_1316.